The following is a 409-amino-acid chain: Glucan endo-1,6-beta-glucosidase B (409 aa).

The N-terminal stretch at 1–16 (MKFILPLFTSLPVALA) is a signal peptide. N-linked (GlcNAc...) asparagine glycosylation occurs at asparagine 35. Catalysis depends on glutamate 228, which acts as the Proton donor. Glutamate 330 serves as the catalytic Nucleophile.

This sequence belongs to the glycosyl hydrolase 5 (cellulase A) family.

Its subcellular location is the secreted. It carries out the reaction Random hydrolysis of (1-&gt;6)-linkages in (1-&gt;6)-beta-D-glucans.. Its function is as follows. Beta-glucanases participate in the metabolism of beta-glucan, the main structural component of the cell wall. Acts on lutean, pustulan and 1,6-oligo-beta-D-glucosides. The protein is Glucan endo-1,6-beta-glucosidase B (exgB) of Emericella nidulans (strain FGSC A4 / ATCC 38163 / CBS 112.46 / NRRL 194 / M139) (Aspergillus nidulans).